We begin with the raw amino-acid sequence, 152 residues long: MDEQEIQRLVEEVSLQYFGMPFLHKAMFNSRLRTTGGRYLLNTHNIELNYRYYEMYGKEELVGIVKHELCHYHLHIAGRGYKHRDKDFRELLKAVDAPRFCKRMINEEKGKKVYMYECMECSLQYVRRRQINTKRYVCGKCKGKLILIKKTS.

In terms of domain architecture, SprT-like spans 7-148; sequence QRLVEEVSLQ…GKCKGKLILI (142 aa). His67 contributes to the Zn(2+) binding site. Residue Glu68 is part of the active site. His71 lines the Zn(2+) pocket.

The protein belongs to the SprT family. The cofactor is Zn(2+).

Its subcellular location is the cytoplasm. The polypeptide is Protein SprT-like (Bacillus cereus (strain AH187)).